The primary structure comprises 141 residues: Small ribosomal subunit protein uS12 (141 aa).

At Asp-89 the chain carries 3-methylthioaspartic acid. The interval 104–141 is disordered; that stretch reads ASGAVGPSNTNKLNRNVSRSKYGVKRPKAGAKPASKAK. Residues 110–122 show a composition bias toward polar residues; the sequence is PSNTNKLNRNVSR. The segment covering 125–141 has biased composition (basic residues); it reads YGVKRPKAGAKPASKAK.

This sequence belongs to the universal ribosomal protein uS12 family. In terms of assembly, part of the 30S ribosomal subunit. Contacts proteins S8 and S17. May interact with IF1 in the 30S initiation complex.

Functionally, with S4 and S5 plays an important role in translational accuracy. Its function is as follows. Interacts with and stabilizes bases of the 16S rRNA that are involved in tRNA selection in the A site and with the mRNA backbone. Located at the interface of the 30S and 50S subunits, it traverses the body of the 30S subunit contacting proteins on the other side and probably holding the rRNA structure together. The combined cluster of proteins S8, S12 and S17 appears to hold together the shoulder and platform of the 30S subunit. The chain is Small ribosomal subunit protein uS12 from Methylacidiphilum infernorum (isolate V4) (Methylokorus infernorum (strain V4)).